The primary structure comprises 72 residues: Large ribosomal subunit protein bL28 (72 aa).

This sequence belongs to the bacterial ribosomal protein bL28 family.

This is Large ribosomal subunit protein bL28 from Pelodictyon phaeoclathratiforme (strain DSM 5477 / BU-1).